The primary structure comprises 261 residues: RNA-binding protein 1 (261 aa).

Disordered regions lie at residues 1–38 (MADG…SGNE) and 232–261 (QFSR…RGRR). An RRM domain is found at 151-236 (PTLYIEGLPS…SHLRLQFSRY (86 aa)). Over residues 240 to 254 (RSGGGPRSSGPPRGG) the composition is skewed to gly residues.

As to expression, ubiquitous.

Its subcellular location is the nucleus speckle. It is found in the cytoplasmic granule. RNA-binding protein interacting with the enod40 RNA. The sequence is that of RNA-binding protein 1 from Medicago truncatula (Barrel medic).